Reading from the N-terminus, the 355-residue chain is MTDLASDFDFDLPPALIAEHPARPRDSARLLDIPAAGPFHDRIVRDLPSLLRPGDLLVANDTAVIPAQLDARRGEARIGITLDRILPDGTWHALARNARRLRAGDVLTFPGTPNTAAVISRDDEGGVVLRFDTEGAAFDAFLQAAGVLALPPYIARPFGPTEQDRVDYATIFSAHRGAVAAPTAGLHFTPDLLAALDAAGVGRCTLTLHVGAGTFLPVRGDSIAAHRMHAERGVITAETADAINAARRAGGRIVAVGTTSLRLLESAADPDGTIRPFDGDTAIFIRPGYRFRAVDVLMTNFHLPRSTLFMLVCAFAGYDRMRDAYAHAVADGYRFYSYGDACLLHRAPVAGEQGL.

The protein belongs to the QueA family. In terms of assembly, monomer.

It localises to the cytoplasm. It carries out the reaction 7-aminomethyl-7-carbaguanosine(34) in tRNA + S-adenosyl-L-methionine = epoxyqueuosine(34) in tRNA + adenine + L-methionine + 2 H(+). It participates in tRNA modification; tRNA-queuosine biosynthesis. Its function is as follows. Transfers and isomerizes the ribose moiety from AdoMet to the 7-aminomethyl group of 7-deazaguanine (preQ1-tRNA) to give epoxyqueuosine (oQ-tRNA). The protein is S-adenosylmethionine:tRNA ribosyltransferase-isomerase of Gluconacetobacter diazotrophicus (strain ATCC 49037 / DSM 5601 / CCUG 37298 / CIP 103539 / LMG 7603 / PAl5).